Reading from the N-terminus, the 600-residue chain is Chaperone protein DnaK (600 aa).

T175 is modified (phosphothreonine; by autocatalysis). The tract at residues 572–600 (FAQQTQQQDPNNQKDDVTEATVTDDSTKK) is disordered. Polar residues predominate over residues 591–600 (ATVTDDSTKK).

This sequence belongs to the heat shock protein 70 family.

In terms of biological role, acts as a chaperone. The protein is Chaperone protein DnaK of Ureaplasma urealyticum serovar 10 (strain ATCC 33699 / Western).